The primary structure comprises 250 residues: DNA repair protein RecO (250 aa).

This sequence belongs to the RecO family.

In terms of biological role, involved in DNA repair and RecF pathway recombination. The sequence is that of DNA repair protein RecO from Staphylococcus aureus (strain bovine RF122 / ET3-1).